The primary structure comprises 59 residues: Large ribosomal subunit protein uL30 (59 aa).

The protein belongs to the universal ribosomal protein uL30 family. Part of the 50S ribosomal subunit.

This is Large ribosomal subunit protein uL30 from Leptospira borgpetersenii serovar Hardjo-bovis (strain JB197).